Reading from the N-terminus, the 377-residue chain is Actin depolymerising venom protein gelsolin 1 (377 aa).

The N-terminal stretch at 1–26 is a signal peptide; the sequence is MFRQMKLGSLATKLLLACFLVTCTSG. Gelsolin-like repeat units lie at residues 50–133, 174–243, and 298–368; these read FVPV…SEQF, IRVR…SSTS, and EKPL…PTAF.

In terms of tissue distribution, expressed by the venom gland (posterior main gland) (at protein level).

It localises to the secreted. In Platymeris rhadamanthus (Red spot assassin bug), this protein is Actin depolymerising venom protein gelsolin 1.